We begin with the raw amino-acid sequence, 81 residues long: ATP synthase subunit c, chloroplastic (81 aa).

2 helical membrane passes run 3-23 (AIVS…AAIG) and 57-77 (LAFM…LLFA).

It belongs to the ATPase C chain family. F-type ATPases have 2 components, F(1) - the catalytic core - and F(0) - the membrane proton channel. F(1) has five subunits: alpha(3), beta(3), gamma(1), delta(1), epsilon(1). F(0) has four main subunits: a(1), b(1), b'(1) and c(10-14). The alpha and beta chains form an alternating ring which encloses part of the gamma chain. F(1) is attached to F(0) by a central stalk formed by the gamma and epsilon chains, while a peripheral stalk is formed by the delta, b and b' chains.

It is found in the plastid. It localises to the chloroplast thylakoid membrane. In terms of biological role, f(1)F(0) ATP synthase produces ATP from ADP in the presence of a proton or sodium gradient. F-type ATPases consist of two structural domains, F(1) containing the extramembraneous catalytic core and F(0) containing the membrane proton channel, linked together by a central stalk and a peripheral stalk. During catalysis, ATP synthesis in the catalytic domain of F(1) is coupled via a rotary mechanism of the central stalk subunits to proton translocation. Functionally, key component of the F(0) channel; it plays a direct role in translocation across the membrane. A homomeric c-ring of between 10-14 subunits forms the central stalk rotor element with the F(1) delta and epsilon subunits. The chain is ATP synthase subunit c, chloroplastic from Cyanidioschyzon merolae (strain NIES-3377 / 10D) (Unicellular red alga).